Reading from the N-terminus, the 65-residue chain is Large ribosomal subunit protein bL35 (65 aa).

Residues 1–16 show a composition bias toward basic residues; it reads MVPKQKTHSGAKKRFK. The disordered stretch occupies residues 1-39; the sequence is MVPKQKTHSGAKKRFKLTGSGSVSRARAGMRHNFEHRSS.

It belongs to the bacterial ribosomal protein bL35 family.

The chain is Large ribosomal subunit protein bL35 from Tropheryma whipplei (strain TW08/27) (Whipple's bacillus).